We begin with the raw amino-acid sequence, 631 residues long: Nucleoside triphosphatase I (631 aa).

A Helicase ATP-binding domain is found at 42–204 (FLGLDSMHSL…TMLVNLLRPG (163 aa)). 55-62 (HETGVGKT) lines the ATP pocket. The DEXH box signature appears at 141-144 (DECH). The 166-residue stretch at 367–532 (KFIDVCLGIL…EFVQLFRVFK (166 aa)) folds into the Helicase C-terminal domain. Positions 457–524 (DIFILDMTWN…EIIQSKSKEF (68 aa)) are binding to the cap-specific mRNA (nucleoside-2'-O-)-methyltransferase.

Belongs to the helicase family. NPH I subfamily. Monomer. Interacts (via C-terminus) with RAP94/OPG109 (via N-terminus). Interacts with the cap-specific mRNA (nucleoside-2'-O-)-methyltransferase OPG102.

It localises to the virion. It catalyses the reaction a ribonucleoside 5'-triphosphate + H2O = a ribonucleoside 5'-diphosphate + phosphate + H(+). In terms of biological role, DNA-dependent ATPase that acts as a 5' to 3' translocase on single-stranded DNA and thereby plays a role in transcription termination of viral early genes. Uses forward translocation in concert with the viral RNA polymerase RAP94/OPG109 subunit and the capping enzyme/VTF to catalyze release of UUUUUNU-containing nascent RNA from the elongation complex. In addition, acts as a positive elongation factor to assist transcription through problematic sequences. This chain is Nucleoside triphosphatase I (OPG123), found in Bos taurus (Bovine).